The following is a 118-amino-acid chain: Large ribosomal subunit protein bL20 (118 aa).

It belongs to the bacterial ribosomal protein bL20 family.

In terms of biological role, binds directly to 23S ribosomal RNA and is necessary for the in vitro assembly process of the 50S ribosomal subunit. It is not involved in the protein synthesizing functions of that subunit. The protein is Large ribosomal subunit protein bL20 of Marinomonas sp. (strain MWYL1).